A 229-amino-acid polypeptide reads, in one-letter code: MSQPRPLLSPPETEEQLLAQAQQLSGYTLGELAALDGLVTPENLKRDKGWIGVLLEIWLGASAGSKPEQDFAALGVELKTIPVDSLGRPLETTFVCVARLTGNSGVTWETSHVRHKLKRVLWIPVEGERSIPLAQRRVGSPLLWSPNEEEDRQLREDWEELMDMIVLGQVERITARHGEYLQIRPKAANAKALTEAIGARGERILTLPRGFYLKKNFTSALLARHSLIQ.

This sequence belongs to the MutH family.

Its subcellular location is the cytoplasm. In terms of biological role, sequence-specific endonuclease that cleaves unmethylated GATC sequences. It is involved in DNA mismatch repair. This is DNA mismatch repair protein MutH from Shigella flexneri.